A 448-amino-acid polypeptide reads, in one-letter code: Histidinol dehydrogenase (448 aa).

Residues Tyr136, Gln197, and Asn220 each contribute to the NAD(+) site. Residues Ser243, Gln265, and His268 each coordinate substrate. 2 residues coordinate Zn(2+): Gln265 and His268. Active-site proton acceptor residues include Glu333 and His334. Residues His334, Asp367, Glu421, and His426 each coordinate substrate. Asp367 is a Zn(2+) binding site. Residue His426 coordinates Zn(2+).

The protein belongs to the histidinol dehydrogenase family. Zn(2+) is required as a cofactor.

It carries out the reaction L-histidinol + 2 NAD(+) + H2O = L-histidine + 2 NADH + 3 H(+). It participates in amino-acid biosynthesis; L-histidine biosynthesis; L-histidine from 5-phospho-alpha-D-ribose 1-diphosphate: step 9/9. In terms of biological role, catalyzes the sequential NAD-dependent oxidations of L-histidinol to L-histidinaldehyde and then to L-histidine. The polypeptide is Histidinol dehydrogenase (Pseudomonas syringae pv. tomato (strain ATCC BAA-871 / DC3000)).